The following is a 206-amino-acid chain: High frequency lysogenization protein HflD homolog (206 aa).

It belongs to the HflD family.

The protein localises to the cytoplasm. Its subcellular location is the cell inner membrane. The chain is High frequency lysogenization protein HflD homolog from Idiomarina loihiensis (strain ATCC BAA-735 / DSM 15497 / L2-TR).